Here is a 2705-residue protein sequence, read N- to C-terminus: Teneurin-1 (2705 aa).

2 disordered regions span residues 1–73 (MEQM…STQD) and 135–222 (CLSS…TQDS). Positions 1–299 (MEQMDCKPYQ…KPYRCCNWKC (299 aa)) constitute a Teneurin N-terminal domain. At 1–305 (MEQMDCKPYQ…NWKCTALSAT (305 aa)) the chain is on the cytoplasmic side. Positions 32-46 (DGRKQRQSYDSRETL) are enriched in basic and acidic residues. The short motif at 62-65 (RKRK) is the Nuclear localization signal (NLS) element. Residues 135–147 (CLSSRANSALSLT) show a composition bias toward polar residues. Over residues 148–157 (DTDHERKSDG) the composition is skewed to basic and acidic residues. Residues 173–182 (PLPPPPPPPH) are compositionally biased toward pro residues. The Required for interaction with SORBS1 (Ten-1 ICD form) signature appears at 271-278 (PPPRPLPR). Residues 306-326 (AITVTLALLLAYVIAVHLFGL) traverse the membrane as a helical segment. Topologically, residues 327–2705 (TWQLQPVEGQ…FMRQSEIGRR (2379 aa)) are extracellular. Asn-414 carries N-linked (GlcNAc...) asparagine glycosylation. EGF-like domains lie at 509-540 (VLDD…PDCA), 541-572 (KDSC…ECDV), 573-605 (PEEQ…EICE), 606-638 (EEDC…NCET), 639-672 (SLPI…SDCS), 673-702 (TELC…GPTC), 703-734 (EERT…DHCT), and 735-769 (IDGC…SGCN). Intrachain disulfides connect Cys-513–Cys-523, Cys-517–Cys-528, Cys-530–Cys-539, Cys-548–Cys-559, Cys-561–Cys-570, Cys-577–Cys-588, Cys-582–Cys-593, Cys-595–Cys-604, Cys-609–Cys-620, Cys-614–Cys-625, Cys-627–Cys-636, Cys-647–Cys-660, Cys-662–Cys-671, Cys-676–Cys-686, Cys-680–Cys-691, Cys-693–Cys-702, Cys-707–Cys-717, Cys-711–Cys-722, Cys-724–Cys-733, Cys-738–Cys-748, Cys-742–Cys-757, and Cys-759–Cys-768. N-linked (GlcNAc...) asparagine glycosylation is found at Asn-878 and Asn-1057. 5 NHL repeats span residues 1167–1192 (LFAP…VRRI), 1202–1246 (LELR…AKSL), 1272–1316 (SHCG…NGMI), 1331–1382 (LSCD…IAGR), and 1461–1504 (CFSG…VSRN). The stretch at 1514 to 1533 (YEIASPADQELYQFTINGTH) is one YD 1 repeat. N-linked (GlcNAc...) asparagine glycosylation is found at Asn-1530 and Asn-1547. YD repeat units lie at residues 1550 to 1570 (YSGE…VHIR), 1588 to 1612 (YWLT…ALMT), 1613 to 1634 (YPGN…TVYE), and 1635 to 1655 (YDSD…SSFH). Residues Asn-1643, Asn-1679, Asn-1737, Asn-1761, and Asn-1822 are each glycosylated (N-linked (GlcNAc...) asparagine). YD repeat units follow at residues 1825–1844 (YSHS…EKME), 1845–1865 (YDPS…WSYT), 1866–1884 (YLEK…YIFE), 1885–1905 (YDQS…HALQ), 1913–1929 (YRNI…FIQD), 1930–1949 (VTRD…RRVL), 1950–1969 (YKYS…TQVT), 1972–1992 (YEES…FICT), 1995–2015 (YRQT…EGLV), 2065–2085 (YDLN…FSAN), and 2093–2113 (YEIL…MGRM). A glycan (N-linked (GlcNAc...) asparagine) is linked at Asn-2125. YD repeat units lie at residues 2133–2153 (YDRD…WRYS), 2154–2174 (YDLN…LTPL), 2176–2196 (YDLR…DEDG), 2208–2228 (YNSN…TVQY), and 2230–2250 (YDGL…LQFF). A glycan (N-linked (GlcNAc...) asparagine) is linked at Asn-2265. YD repeat units follow at residues 2276 to 2293 (YDLQ…GEEY) and 2294 to 2317 (YVAC…IKEI). N-linked (GlcNAc...) asparagine glycosylation is present at Asn-2582.

It belongs to the tenascin family. Teneurin subfamily. As to quaternary structure, homodimer; disulfide-linked. Heterodimer with other teneurins. Ten-1 ICD interacts with SORBS1 (via third SH3 domain). Interacts with MBD1 isoform 2. Derives from the plasma membrane form by proteolytic processing. Further proteolytic cleavage may be generated. In terms of processing, derives from the plasma membrane form by proteolytic cleavage and translocates to the nucleus. As to expression, expressed in the neurons of the developing visual system and in fetal brain.

The protein localises to the cell membrane. Its subcellular location is the nucleus. It is found in the nucleus speckle. It localises to the nucleus matrix. The protein resides in the cytoplasm. The protein localises to the cytoskeleton. Functionally, involved in neural development, regulating the establishment of proper connectivity within the nervous system. May function as a cellular signal transducer. Its function is as follows. Plays a role in the regulation of neuroplasticity in the limbic system. Mediates a rapid reorganization of actin- and tubulin-based cytoskeleton elements with an increase in dendritic arborization and spine density formation of neurons in the hippocampus and amygdala. Induces BDNF transcription inhibition in neurons. Activates the mitogen-activated protein (MAP) kinase 2 (MEK2) and extracellular signal-regulated kinase (ERK) cascade. In terms of biological role, induces gene transcription activation. The polypeptide is Teneurin-1 (TENM1) (Gallus gallus (Chicken)).